Here is a 493-residue protein sequence, read N- to C-terminus: Mitochondrial distribution and morphology protein 10 (493 aa).

This sequence belongs to the MDM10 family. As to quaternary structure, component of the ER-mitochondria encounter structure (ERMES) or MDM complex, composed of MMM1, MDM10, MDM12 and MDM34. Associates with the mitochondrial outer membrane sorting assembly machinery SAM(core) complex, which consists of SAM35, SAM37 and SAM50, to form a SAM(holo) complex.

It localises to the mitochondrion outer membrane. Its function is as follows. Component of the ERMES/MDM complex, which serves as a molecular tether to connect the endoplasmic reticulum and mitochondria. Components of this complex are involved in the control of mitochondrial shape and protein biogenesis and may function in phospholipid exchange. MDM10 is involved in the late assembly steps of the general translocase of the mitochondrial outer membrane (TOM complex). Functions in the TOM40-specific route of the assembly of outer membrane beta-barrel proteins, including the association of TOM40 with the receptor TOM22 and small TOM proteins. Can associate with the SAM(core) complex as well as the MDM12-MMM1 complex, both involved in late steps of the major beta-barrel assembly pathway, that is responsible for biogenesis of all outer membrane beta-barrel proteins. May act as a switch that shuttles between both complexes and channels precursor proteins into the TOM40-specific pathway. Plays a role in mitochondrial morphology and in the inheritance of mitochondria. The chain is Mitochondrial distribution and morphology protein 10 from Saccharomyces cerevisiae (strain YJM789) (Baker's yeast).